The chain runs to 194 residues: Ribosome maturation factor RimP (194 aa).

It belongs to the RimP family.

It is found in the cytoplasm. In terms of biological role, required for maturation of 30S ribosomal subunits. The chain is Ribosome maturation factor RimP from Jannaschia sp. (strain CCS1).